Consider the following 365-residue polypeptide: Pre-mRNA-splicing factor srp2 (365 aa).

2 consecutive RRM domains span residues 6–69 (LFVG…RIVV) and 100–166 (LIVE…AVTL). Residues 166–365 (LREDPDAANE…SAEGQVAAEW (200 aa)) are disordered. Positions 184–194 (FRSRSPPARRR) are enriched in basic residues. A phosphoserine mark is found at S186, S188, S276, S294, S296, S298, and S308. Residues 195–307 (YRDDYRRGGD…SPRRDREENR (113 aa)) show a composition bias toward basic and acidic residues. The segment covering 316–332 (SYSAAPEASMESSAPTE) has biased composition (low complexity). Positions 341 to 353 (EEQQPLQNHSDVG) are enriched in polar residues.

It belongs to the splicing factor SR family. Extensively phosphorylated on serine residues in the RS domain.

It localises to the nucleus. Functionally, has a role in pre-mRNA splicing where it is involved in spliceosome assembly. This Schizosaccharomyces pombe (strain 972 / ATCC 24843) (Fission yeast) protein is Pre-mRNA-splicing factor srp2 (srp2).